Consider the following 850-residue polypeptide: Mitogen-activated protein kinase kinase kinase 11 (850 aa).

Serine 11 carries the phosphoserine modification. A disordered region spans residues 16–35 (WNGSGSGGGGGTGGVRPEGS). The segment covering 17–31 (NGSGSGGGGGTGGVR) has biased composition (gly residues). Serine 35 carries the phosphoserine modification. The region spanning 42–106 (YANPVWTALF…PSNYVSRGGG (65 aa)) is the SH3 domain. The region spanning 118–380 (LRLEEVIGIG…ASILQQLEAL (263 aa)) is the Protein kinase domain. ATP contacts are provided by residues 124-132 (IGIGGFGKV) and lysine 145. Aspartate 242 acts as the Proton acceptor in catalysis. Threonine 278 is modified (phosphothreonine; by autocatalysis). Serine 282 bears the Phosphoserine; by autocatalysis and MAP4K1 mark. Serine 395 carries the phosphoserine modification. Leucine-zipper regions lie at residues 404–425 (IQGLFDELRAKEKELLSREEEL) and 439–460 (LRRREHLLAQWELEVFERELTL). Serine 508 and serine 525 each carry phosphoserine. A disordered region spans residues 535–644 (QLEPTESGQT…SSGTPKLIQR (110 aa)). Residues 538-547 (PTESGQTWGR) are compositionally biased toward polar residues. 3 positions are modified to phosphoserine: serine 549, serine 556, and serine 557. Basic and acidic residues predominate over residues 551–563 (RRLEDSSNGERRA). Low complexity predominate over residues 598 to 610 (SSPLGSPSTPPAL). Serine 655 bears the Phosphoserine mark. The interval 657–850 (GLGRDLQPPG…QAPWAPEAGP (194 aa)) is disordered. Pro residues predominate over residues 677–693 (TAPPPAQMPSPCPPELP). Over residues 700-711 (LSQTTPDAHSSP) the composition is skewed to polar residues. At serine 709 the chain carries Phosphoserine. Threonine 712 bears the Phosphothreonine mark. 9 positions are modified to phosphoserine: serine 728, serine 731, serine 743, serine 751, serine 761, serine 773, serine 792, serine 796, and serine 818. The segment covering 763–776 (PLGLISRPRPSPLR) has biased composition (low complexity). A compositionally biased stretch (pro residues) spans 790–802 (RPSPLPSPQPAPR). Positions 803 to 819 (RAPWTLFPDSDPFWDSP) are enriched in low complexity.

It belongs to the protein kinase superfamily. STE Ser/Thr protein kinase family. MAP kinase kinase kinase subfamily. In terms of assembly, homodimer; undergoes dimerization during activation. Interacts with MAP2K4/MKK4 and MAP2K7/MKK7. Found in a complex with SH3RF1, RAC1, MAP2K7/MKK7, MAPK8IP1/JIP1 and MAPK8/JNK1. The cofactor is Mg(2+). In terms of processing, autophosphorylation on serine and threonine residues within the activation loop plays a role in enzyme activation. Thr-278 is likely to be the main autophosphorylation site. Phosphorylation of Ser-556 and Ser-557 is induced by CDC42.

It localises to the cytoplasm. Its subcellular location is the cytoskeleton. The protein resides in the microtubule organizing center. It is found in the centrosome. The catalysed reaction is L-seryl-[protein] + ATP = O-phospho-L-seryl-[protein] + ADP + H(+). It catalyses the reaction L-threonyl-[protein] + ATP = O-phospho-L-threonyl-[protein] + ADP + H(+). With respect to regulation, homodimerization via the leucine zipper domains is required for autophosphorylation and subsequent activation. Its function is as follows. Activates the JUN N-terminal pathway. Required for serum-stimulated cell proliferation and for mitogen and cytokine activation of MAPK14 (p38), MAPK3 (ERK) and MAPK8 (JNK1) through phosphorylation and activation of MAP2K4/MKK4 and MAP2K7/MKK7. Plays a role in mitogen-stimulated phosphorylation and activation of BRAF, but does not phosphorylate BRAF directly. Influences microtubule organization during the cell cycle. In Mus musculus (Mouse), this protein is Mitogen-activated protein kinase kinase kinase 11 (Map3k11).